A 26-amino-acid chain; its full sequence is Hemocyanin subunit B (26 aa).

This sequence belongs to the tyrosinase family. Hemocyanin subfamily. As to expression, hemolymph.

It is found in the secreted. It localises to the extracellular space. Its function is as follows. Hemocyanins are copper-containing oxygen carriers occurring freely dissolved in the hemolymph of many mollusks and arthropods. The sequence is that of Hemocyanin subunit B from Carcinus maenas (Common shore crab).